The primary structure comprises 1944 residues: Anaphase-promoting complex subunit 1 (1944 aa).

Ser51 and Ser60 each carry phosphoserine. Position 291 is a phosphothreonine (Thr291). A disordered region spans residues Glu312–Ser343. Phosphoserine occurs at positions 313, 341, 343, 355, 362, 373, and 377. Residues Ser323–Ser343 are compositionally biased toward low complexity. A disordered region spans residues Asn370–Phe395. A compositionally biased stretch (polar residues) spans Ser384–Asp393. Thr537 is subject to Phosphothreonine. 2 positions are modified to phosphoserine: Ser547 and Ser555. Position 571 is a phosphotyrosine (Tyr571). Phosphoserine is present on residues Ser680, Ser686, and Ser688. The segment at Asn991 to Asp1014 is disordered. A compositionally biased stretch (polar residues) spans Val998–Thr1007. 4 PC repeats span residues Ala1297–Leu1325, Gly1366–Leu1404, Gly1467–Ala1501, and Leu1520–Tyr1552.

This sequence belongs to the APC1 family. In terms of assembly, the mammalian APC/C is composed at least of 14 distinct subunits ANAPC1, ANAPC2, CDC27/APC3, ANAPC4, ANAPC5, CDC16/APC6, ANAPC7, CDC23/APC8, ANAPC10, ANAPC11, CDC26/APC12, ANAPC13, ANAPC15 and ANAPC16 that assemble into a complex of at least 19 chains with a combined molecular mass of around 1.2 MDa; APC/C interacts with FZR1 and FBXO5. In terms of processing, phosphorylated. Phosphorylation on Ser-355 occurs specifically during mitosis. Abundantly expressed in proliferating fibroblasts, juvenile testis, adult brain and epididymis.

It participates in protein modification; protein ubiquitination. Its function is as follows. Component of the anaphase promoting complex/cyclosome (APC/C), a cell cycle-regulated E3 ubiquitin ligase that controls progression through mitosis and the G1 phase of the cell cycle. The APC/C complex acts by mediating ubiquitination and subsequent degradation of target proteins: it mainly mediates the formation of 'Lys-11'-linked polyubiquitin chains and, to a lower extent, the formation of 'Lys-48'- and 'Lys-63'-linked polyubiquitin chains. The APC/C complex catalyzes assembly of branched 'Lys-11'-/'Lys-48'-linked branched ubiquitin chains on target proteins. The sequence is that of Anaphase-promoting complex subunit 1 (Anapc1) from Mus musculus (Mouse).